The primary structure comprises 932 residues: Protein translocase subunit SecA (932 aa).

ATP contacts are provided by residues Gln-83, 101 to 105 (GEGKT), and Asp-491.

Belongs to the SecA family. As to quaternary structure, monomer and homodimer. Part of the essential Sec protein translocation apparatus which comprises SecA, SecYEG and auxiliary proteins SecDF. Other proteins may also be involved.

It localises to the cell inner membrane. It is found in the cellular thylakoid membrane. Its subcellular location is the cytoplasm. The catalysed reaction is ATP + H2O + cellular proteinSide 1 = ADP + phosphate + cellular proteinSide 2.. Functionally, part of the Sec protein translocase complex. Interacts with the SecYEG preprotein conducting channel. Has a central role in coupling the hydrolysis of ATP to the transfer of proteins into and across the cell membrane, serving as an ATP-driven molecular motor driving the stepwise translocation of polypeptide chains across the membrane. In terms of biological role, probably participates in protein translocation into and across both the cytoplasmic and thylakoid membranes in cyanobacterial cells. In Cyanothece sp. (strain PCC 7425 / ATCC 29141), this protein is Protein translocase subunit SecA.